The chain runs to 497 residues: Probable malate:quinone oxidoreductase (497 aa).

The protein belongs to the MQO family. Requires FAD as cofactor.

It catalyses the reaction (S)-malate + a quinone = a quinol + oxaloacetate. Its pathway is carbohydrate metabolism; tricarboxylic acid cycle; oxaloacetate from (S)-malate (quinone route): step 1/1. The chain is Probable malate:quinone oxidoreductase from Tolumonas auensis (strain DSM 9187 / NBRC 110442 / TA 4).